The chain runs to 121 residues: Putative membrane protein insertion efficiency factor (121 aa).

This sequence belongs to the UPF0161 family.

The protein localises to the cell inner membrane. Could be involved in insertion of integral membrane proteins into the membrane. The sequence is that of Putative membrane protein insertion efficiency factor from Rhodopseudomonas palustris (strain HaA2).